The sequence spans 1014 residues: 2-oxoglutarate dehydrogenase, mitochondrial (1014 aa).

Residues 1-30 (MLRFVSSQTCRYSSRGLLKTSLLKNASTVK) constitute a mitochondrion transit peptide. Residues arginine 306, aspartate 406, asparagine 439, and isoleucine 441 each contribute to the thiamine diphosphate site. Positions 406, 439, and 441 each coordinate Mg(2+).

Belongs to the alpha-ketoglutarate dehydrogenase family. In terms of assembly, component of the 2-oxoglutarate dehydrogenase complex (OGDC), also called alpha-ketoglutarate dehydrogenase (KGDH) complex. The copmplex is composed of the catalytic subunits OGDH (2-oxoglutarate dehydrogenase KGD1; also called E1 subunit), DLST (dihydrolipoamide succinyltransferase KGD2; also called E2 subunit) and DLD (dihydrolipoamide dehydrogenase LPD1; also called E3 subunit), and the assembly factor KGD4. Thiamine diphosphate is required as a cofactor. It depends on Mg(2+) as a cofactor.

The protein resides in the mitochondrion. The protein localises to the mitochondrion matrix. It localises to the mitochondrion nucleoid. It carries out the reaction N(6)-[(R)-lipoyl]-L-lysyl-[protein] + 2-oxoglutarate + H(+) = N(6)-[(R)-S(8)-succinyldihydrolipoyl]-L-lysyl-[protein] + CO2. Its activity is regulated as follows. Catabolite repressed. Its function is as follows. The 2-oxoglutarate dehydrogenase complex catalyzes the overall conversion of 2-oxoglutarate to succinyl-CoA and CO(2). It contains multiple copies of three enzymatic components: 2-oxoglutarate dehydrogenase (E1), dihydrolipoamide succinyltransferase (E2) and lipoamide dehydrogenase (E3). The polypeptide is 2-oxoglutarate dehydrogenase, mitochondrial (KGD1) (Saccharomyces cerevisiae (strain ATCC 204508 / S288c) (Baker's yeast)).